Reading from the N-terminus, the 416-residue chain is Serine protease hepsin (416 aa).

Residues 1 to 18 lie on the Cytoplasmic side of the membrane; the sequence is MAKEGGRTAPCCSRPKVA. Residues 19-39 traverse the membrane as a helical; Signal-anchor for type II membrane protein segment; sequence ALTVGTLLFLTGIGAASWAIV. The Extracellular portion of the chain corresponds to 40–416; that stretch reads TILLRSDQEP…SEATGMVTQP (377 aa). The SRCR domain maps to 53–150; it reads VQLSPGDSRL…RGRFLTATCQ (98 aa). Intrachain disulfides connect Cys76/Cys139, Cys89/Cys149, Cys118/Cys137, Cys152/Cys276, Cys187/Cys203, Cys290/Cys358, Cys321/Cys337, and Cys348/Cys380. N-linked (GlcNAc...) asparagine glycosylation occurs at Asn111. The Peptidase S1 domain occupies 162–404; it reads IVGGQDSSLG…FREWIFQAIK (243 aa). Residues His202 and Asp256 each act as charge relay system in the active site. Residue Ser352 is the Charge relay system of the active site.

This sequence belongs to the peptidase S1 family. Widely expressed. Present in brain, heart, kidney, liver, stomach, muscle, lung, testis, skin and eye. Not expressed in ovary and thynus. In inner ear tissues, expressed in stria vascularis, modiolus, organ of Corti and spiral ganglion.

The protein resides in the cell membrane. It is found in the apical cell membrane. The enzyme catalyses Cleavage after basic amino-acid residues, with Arg strongly preferred to Lys.. Its function is as follows. Serine protease that cleaves extracellular substrates, and contributes to the proteolytic processing of growth factors, such as HGF and MST1/HGFL. Plays a role in cell growth and maintenance of cell morphology. Plays a role in the proteolytic processing of ACE2. Mediates the proteolytic cleavage of urinary UMOD that is required for UMOD polymerization. The polypeptide is Serine protease hepsin (Hpn) (Rattus norvegicus (Rat)).